The sequence spans 28 residues: Potassium channel toxin alpha-KTx 9.3 (28 aa).

3 disulfide bridges follow: C3/C19, C6/C24, and C10/C26.

The protein belongs to the short scorpion toxin superfamily. Potassium channel inhibitor family. Alpha-KTx 09 subfamily. In terms of tissue distribution, expressed by the venom gland.

The protein resides in the secreted. In terms of biological role, inhibits voltage-gated potassium channels. The chain is Potassium channel toxin alpha-KTx 9.3 from Aegaeobuthus nigrocinctus (Scorpion).